A 217-amino-acid chain; its full sequence is Large ribosomal subunit protein uL1 (217 aa).

It belongs to the universal ribosomal protein uL1 family.

The polypeptide is Large ribosomal subunit protein uL1 (RPL10A) (Candida glabrata (strain ATCC 2001 / BCRC 20586 / JCM 3761 / NBRC 0622 / NRRL Y-65 / CBS 138) (Yeast)).